A 505-amino-acid chain; its full sequence is Histidine ammonia-lyase (505 aa).

Positions Ala-141–Gly-143 form a cross-link, 5-imidazolinone (Ala-Gly). Residue Ser-142 is modified to 2,3-didehydroalanine (Ser).

It belongs to the PAL/histidase family. Post-translationally, contains an active site 4-methylidene-imidazol-5-one (MIO), which is formed autocatalytically by cyclization and dehydration of residues Ala-Ser-Gly.

The protein resides in the cytoplasm. The enzyme catalyses L-histidine = trans-urocanate + NH4(+). It functions in the pathway amino-acid degradation; L-histidine degradation into L-glutamate; N-formimidoyl-L-glutamate from L-histidine: step 1/3. The protein is Histidine ammonia-lyase of Bacillus thuringiensis (strain Al Hakam).